A 76-amino-acid polypeptide reads, in one-letter code: Vasotab-TY2 (76 aa).

Residues 1-21 form the signal peptide; the sequence is MKFALFSVLVLMLIATFVAAD. The 55-residue stretch at 22–76 folds into the Kazal-like domain; sequence DCPRICTADYTPVCGTPSGGRRSANRTFANQCGLDSHNCLNKGATYDKLHDGECK. Cystine bridges form between cysteine 23-cysteine 60, cysteine 27-cysteine 53, and cysteine 35-cysteine 75.

Expressed by the salivary gland.

It localises to the secreted. Vasodilator protein that inhibits vasoconstriction of isolated rat femoral artery induced by phenylephrine. Since platelet aggregation and vasoconstriction are key hemostatic responses, particularly in small wounds, this protein likely participates in the antihemostatic responses during blood feeding. Blocks L-type calcium channels (Cav1/CACNA1) in left ventricular myocytes isolated from rat hearts. The chain is Vasotab-TY2 from Tabanus yao (Horsefly).